The chain runs to 218 residues: Cytidylate kinase (218 aa).

21–29 is a binding site for ATP; the sequence is GPAASGKGT.

This sequence belongs to the cytidylate kinase family. Type 1 subfamily.

Its subcellular location is the cytoplasm. It carries out the reaction CMP + ATP = CDP + ADP. It catalyses the reaction dCMP + ATP = dCDP + ADP. The protein is Cytidylate kinase of Rickettsia canadensis (strain McKiel).